We begin with the raw amino-acid sequence, 356 residues long: MLGKMILLPLFVLLCHSLASASLAYRGADISSLLIEEKAGIKYKDVNGQAQPLENILKANGVNSVRQRVWVNPSDGSYNLDYNVKLAKRVKAAGMSVYLDLHFSDTWADPSHQTTPRGWSTNDIGTLTWQVYNYTKEVCDTFASNGIDVSIVAIGNEIRNGLLWPLGKPNNYANIANILHSAAFGVKDSTLSPKPKIMIHLDNGWDWSAQKFFYDSVLSSGAKLVKSDFDLIGVSYYPFYNPSATLSALTTSLKNLRSTYGKDVLVVETDWPVSCPNPAYAFPSDLKDIPFSVAGQKTFVQRVANVVAQTPGGIGLYYWEPAWVQNAALGSSCADNLMVDWRTDQARTSLSVFGTI.

Positions 1 to 21 (MLGKMILLPLFVLLCHSLASA) are cleaved as a signal peptide. N-linked (GlcNAc...) asparagine glycosylation is present at N133. E157 acts as the Proton donor in catalysis. The active-site Nucleophile is the E268.

This sequence belongs to the glycosyl hydrolase 53 family.

It is found in the secreted. The enzyme catalyses The enzyme specifically hydrolyzes (1-&gt;4)-beta-D-galactosidic linkages in type I arabinogalactans.. Its function is as follows. Endogalactanase involved in the degradation of plant cell wall polysaccharides, and more particularly of hairy regions of pectin. The protein is Probable arabinogalactan endo-beta-1,4-galactanase A (galA) of Neosartorya fischeri (strain ATCC 1020 / DSM 3700 / CBS 544.65 / FGSC A1164 / JCM 1740 / NRRL 181 / WB 181) (Aspergillus fischerianus).